Reading from the N-terminus, the 1171-residue chain is Myosin-B/C (1171 aa).

A Myosin motor domain is found at 105–780 (ETVDDIGYLP…AAKELSILQR (676 aa)). 199 to 206 (GESGAGKT) is a binding site for ATP. The interval 671-681 (AHFIRCLKPNE) is actin-binding. The tract at residues 810-1171 (IHFLTRLESN…CFEACAPDRP (362 aa)) is tail.

It belongs to the TRAFAC class myosin-kinesin ATPase superfamily. Myosin family.

The protein resides in the cytoplasm. Myosins are actin-based motor molecules with ATPase activity. Unconventional myosins serve in intracellular movements. Their highly divergent tails are presumed to bind to membranous compartments, which would be moved relative to actin filaments. Plays a role in proper daughter cell budding and separation. This is Myosin-B/C from Toxoplasma gondii.